The following is a 565-amino-acid chain: Genetic interactor of prohibitins 3, mitochondrial (565 aa).

The CP-type G domain maps to 129–315 (TDVLEKIPRG…IYDLPGFTTN (187 aa)).

Belongs to the TRAFAC class YlqF/YawG GTPase family. GEP3 subfamily.

It localises to the mitochondrion. Its function is as follows. May be involved in the mitochondrial lipid metabolism. This is Genetic interactor of prohibitins 3, mitochondrial (GEP3) from Zygosaccharomyces rouxii (strain ATCC 2623 / CBS 732 / NBRC 1130 / NCYC 568 / NRRL Y-229).